The following is a 111-amino-acid chain: Small ribosomal subunit protein bS18 (111 aa).

Positions 1–32 (MDLENTENVENNNNNEEEVKAKGERKAHFNKE) are disordered. The span at 17-32 (EEVKAKGERKAHFNKE) shows a compositional bias: basic and acidic residues.

Belongs to the bacterial ribosomal protein bS18 family. As to quaternary structure, part of the 30S ribosomal subunit. Forms a tight heterodimer with protein bS6.

Functionally, binds as a heterodimer with protein bS6 to the central domain of the 16S rRNA, where it helps stabilize the platform of the 30S subunit. The sequence is that of Small ribosomal subunit protein bS18 from Brachyspira hyodysenteriae (strain ATCC 49526 / WA1).